We begin with the raw amino-acid sequence, 437 residues long: Septin-7 (437 aa).

Position 2 is an N-acetylserine (serine 2). Residue tyrosine 30 is modified to Phosphotyrosine. The Septin-type G domain occupies 47-316 (RGFEFTLMVV…ENYRSRKLAA (270 aa)). Residues 47–317 (RGFEFTLMVV…NYRSRKLAAV (271 aa)) are interaction with SEPTIN12. Positions 57–64 (GESGLGKS) are G1 motif. Residue 57 to 64 (GESGLGKS) participates in GTP binding. At serine 77 the chain carries Phosphoserine. Residues threonine 90, glycine 116, and 195 to 203 (KADTLTPEE) each bind GTP. The tract at residues 113–116 (DTPG) is G3 motif. Positions 194-197 (AKAD) are G4 motif. Residue threonine 228 is modified to Phosphothreonine. The GTP site is built by glycine 250 and arginine 265. The stretch at 332-433 (TKSPLAQMEE…SRTLEKNKKK (102 aa)) forms a coiled coil. Serine 334 is modified (phosphoserine). Lysine 373 is subject to N6-acetyllysine. Residues 378 to 410 (ELQRRHEQMKKNLEAQHKELEEKRRQFEDEKAN) show a composition bias toward basic and acidic residues. The interval 378-437 (ELQRRHEQMKKNLEAQHKELEEKRRQFEDEKANWEAQQRILEQQNSSRTLEKNKKKGKIF) is disordered. Serine 424 is subject to Phosphoserine. A Phosphothreonine modification is found at threonine 426.

The protein belongs to the TRAFAC class TrmE-Era-EngA-EngB-Septin-like GTPase superfamily. Septin GTPase family. Septins polymerize into heterooligomeric protein complexes that form filaments, and associate with cellular membranes, actin filaments and microtubules. GTPase activity is required for filament formation. Filaments are assembled from asymmetrical heterotrimers, composed of SEPTIN2, SEPTIN6 and SEPTIN7 that associate head-to-head to form a hexameric unit. Within the trimer, directly interacts with SEPTIN6, while interaction with SEPTIN2 seems indirect. In the absence of SEPTIN6, forms homodimers. Interacts directly with CENPE and links CENPE to septin filaments composed of SEPTIN2, SEPTIN6 and SEPTIN7. Interacts with SEPTIN5, SEPTIN8, SEPTIN9 and SEPTIN11. Component of a septin core octameric complex consisting of SEPTIN12, SEPTIN7, SEPTIN6 and SEPTIN2 or SEPTIN4 in the order 12-7-6-2-2-6-7-12 or 12-7-6-4-4-6-7-12 and located in the sperm annulus; the SEPTIN12:SEPTIN7 association is mediated by the respective GTP-binding domains.

It is found in the cytoplasm. The protein localises to the chromosome. The protein resides in the centromere. It localises to the kinetochore. Its subcellular location is the cytoskeleton. It is found in the spindle. The protein localises to the cleavage furrow. The protein resides in the midbody. It localises to the cilium axoneme. Its subcellular location is the cell projection. It is found in the cilium. The protein localises to the flagellum. Functionally, filament-forming cytoskeletal GTPase. Required for normal organization of the actin cytoskeleton. Required for normal progress through mitosis. Involved in cytokinesis. Required for normal association of CENPE with the kinetochore. Plays a role in ciliogenesis and collective cell movements. Forms a filamentous structure with SEPTIN12, SEPTIN6, SEPTIN2 and probably SEPTIN4 at the sperm annulus which is required for the structural integrity and motility of the sperm tail during postmeiotic differentiation. The protein is Septin-7 of Bos taurus (Bovine).